We begin with the raw amino-acid sequence, 319 residues long: tRNA-cytidine(32) 2-sulfurtransferase (319 aa).

Residues 43 to 48 (SGGKDS) carry the PP-loop motif motif. Residues cysteine 118, cysteine 121, and cysteine 209 each contribute to the [4Fe-4S] cluster site.

The protein belongs to the TtcA family. As to quaternary structure, homodimer. Mg(2+) serves as cofactor. The cofactor is [4Fe-4S] cluster.

It localises to the cytoplasm. It catalyses the reaction cytidine(32) in tRNA + S-sulfanyl-L-cysteinyl-[cysteine desulfurase] + AH2 + ATP = 2-thiocytidine(32) in tRNA + L-cysteinyl-[cysteine desulfurase] + A + AMP + diphosphate + H(+). Its pathway is tRNA modification. In terms of biological role, catalyzes the ATP-dependent 2-thiolation of cytidine in position 32 of tRNA, to form 2-thiocytidine (s(2)C32). The sulfur atoms are provided by the cysteine/cysteine desulfurase (IscS) system. The chain is tRNA-cytidine(32) 2-sulfurtransferase from Neisseria meningitidis serogroup C / serotype 2a (strain ATCC 700532 / DSM 15464 / FAM18).